The chain runs to 242 residues: UPF0073 membrane protein Rv1085c (242 aa).

A run of 7 helical transmembrane segments spans residues 42-62, 67-87, 108-128, 133-153, 159-179, 186-206, and 222-242; these read VYSAGTAVLAGASLVAVSWAV, AGLTTLAYTAATITMFTVSAT, SMIFVFIAGSYTPFALLALPA, VVLSIVWGGAIAGILLKMCWP, VGVPLYLLLGWVAVWYTATIL, ALVLLFVGGALYSIGGILYAV, and FHACTAVAAICHYIAMWFVVF.

It belongs to the UPF0073 (Hly-III) family.

The protein resides in the cell membrane. This Mycobacterium tuberculosis (strain ATCC 25618 / H37Rv) protein is UPF0073 membrane protein Rv1085c.